Here is an 805-residue protein sequence, read N- to C-terminus: Leucine--tRNA ligase (805 aa).

The 'HIGH' region motif lies at 40 to 51 (PYPSGSGLHVGH). A 'KMSKS' region motif is present at residues 576–580 (KMSKS). Lys-579 lines the ATP pocket.

It belongs to the class-I aminoacyl-tRNA synthetase family.

It is found in the cytoplasm. The catalysed reaction is tRNA(Leu) + L-leucine + ATP = L-leucyl-tRNA(Leu) + AMP + diphosphate. This chain is Leucine--tRNA ligase, found in Chlorobium luteolum (strain DSM 273 / BCRC 81028 / 2530) (Pelodictyon luteolum).